The primary structure comprises 247 residues: Carboxy-S-adenosyl-L-methionine synthase (247 aa).

S-adenosyl-L-methionine contacts are provided by residues tyrosine 39, 64–66, 89–90, 117–118, asparagine 132, and arginine 199; these read GCS, DN, and DI.

This sequence belongs to the class I-like SAM-binding methyltransferase superfamily. Cx-SAM synthase family. As to quaternary structure, homodimer.

The enzyme catalyses prephenate + S-adenosyl-L-methionine = carboxy-S-adenosyl-L-methionine + 3-phenylpyruvate + H2O. In terms of biological role, catalyzes the conversion of S-adenosyl-L-methionine (SAM) to carboxy-S-adenosyl-L-methionine (Cx-SAM). The sequence is that of Carboxy-S-adenosyl-L-methionine synthase from Shigella sonnei (strain Ss046).